The primary structure comprises 231 residues: Acyl-protein thioesterase 2 (231 aa).

The S-palmitoyl cysteine moiety is linked to residue Cys-2. Ser-82 is modified (phosphoserine). Catalysis depends on charge relay system residues Ser-122, Asp-176, and His-210.

This sequence belongs to the AB hydrolase superfamily. AB hydrolase 2 family.

The protein resides in the cytoplasm. It carries out the reaction S-hexadecanoyl-L-cysteinyl-[protein] + H2O = L-cysteinyl-[protein] + hexadecanoate + H(+). The catalysed reaction is prostaglandin E2 1-glyceryl ester + H2O = prostaglandin E2 + glycerol + H(+). The enzyme catalyses 1-hexadecanoyl-sn-glycero-3-phosphocholine + H2O = sn-glycerol 3-phosphocholine + hexadecanoate + H(+). It catalyses the reaction 1-octadecanoyl-sn-glycero-3-phosphocholine + H2O = octadecanoate + sn-glycerol 3-phosphocholine + H(+). It carries out the reaction 1-hexadecanoyl-sn-glycero-3-phosphate + H2O = sn-glycerol 3-phosphate + hexadecanoate + H(+). The catalysed reaction is 1-hexadecanoyl-sn-glycero-3-phospho-L-serine + H2O = sn-glycero-3-phospho-L-serine + hexadecanoate + H(+). Its function is as follows. Acts as an acyl-protein thioesterase hydrolyzing fatty acids from S-acylated cysteine residues in proteins such as trimeric G alpha proteins, GSDMD, GAP43, ZDHHC6 or HRAS. Deacylates GAP43. Mediates depalmitoylation of ZDHHC6. Has lysophospholipase activity. Hydrolyzes prostaglandin glycerol esters (PG-Gs) in the following order prostaglandin D2-glycerol ester (PGD2-G) &gt; prostaglandin E2 glycerol ester (PGE2-G) &gt; prostaglandin F2-alpha-glycerol ester (PGF2-alpha-G). Hydrolyzes 1-arachidonoylglycerol but not 2-arachidonoylglycerol or arachidonoylethanolamide. The protein is Acyl-protein thioesterase 2 (Lypla2) of Rattus norvegicus (Rat).